The primary structure comprises 439 residues: Paraneoplastic antigen-like protein 8A (439 aa).

The interval 208-439 (SALKAETPNN…RRATNESRKV (232 aa)) is disordered. A compositionally biased stretch (basic residues) spans 231 to 249 (LVRRAGAKSRSRRKKQKKN). Basic and acidic residues-rich tracts occupy residues 314 to 326 (GPRE…RAEA), 395 to 404 (SRREASDQKA), and 423 to 439 (AKPE…SRKV).

This sequence belongs to the PNMA family.

This is Paraneoplastic antigen-like protein 8A from Homo sapiens (Human).